Reading from the N-terminus, the 345-residue chain is Ananain (345 aa).

The N-terminal stretch at 1–24 is a signal peptide; that stretch reads MTSKVQLVFLFLFLCVMWASPSAA. A propeptide spans 25 to 122 (activation peptide); that stretch reads SCDEPSDPMM…VSFDDVDISS (98 aa). 3 disulfide bridges follow: cysteine 144-cysteine 184, cysteine 178-cysteine 217, and cysteine 273-cysteine 325. Residue cysteine 147 is part of the active site. Residue cysteine 147 participates in E64 binding. Active-site residues include histidine 279 and asparagine 300.

In terms of tissue distribution, stem (at protein level).

The catalysed reaction is Hydrolysis of proteins with broad specificity for peptide bonds. Best reported small molecule substrate Bz-Phe-Val-Arg-|-NHMec, but broader specificity than fruit bromelain.. Its activity is regulated as follows. Strongly inhibited by chicken egg-white cystatin. Inhibited by iodoacetamide and the active-site-directed inhibitor E64 (L-trans-epoxysuccinyl-leucylamide-(4-guanido)-butane). Functionally, cysteine protease. Displays a high level of diversity in substrate specificity at the P1-P1' cleavage site. A hydrophilic P1 residue is preferred, with Gln or Arg strongly preferred. Favors an Ile/Leu residue at the P2 position of substrates, with an overall higher preference for Leu. The optimal tripeptide for cleavage is Pro-Leu-Gln, with cleavage occurring after the Gln residue. Another optimal tripeptide is Val-Leu-Arg, which may imply that a hydrophobic residue at the P3 position of substrates is preferred. The protein is Ananain of Ananas comosus (Pineapple).